Consider the following 196-residue polypeptide: Interferon lambda-3 (196 aa).

Residues 1–21 form the signal peptide; the sequence is MTGDCMPVLVLMAAVLTVTGA. Cystine bridges form between C37/C136, C71/C169, and C188/C195.

This sequence belongs to the lambda interferon family.

It is found in the secreted. In terms of biological role, cytokine with antiviral, antitumour and immunomodulatory activities. Plays a critical role in the antiviral host defense, predominantly in the epithelial tissues. Acts as a ligand for the heterodimeric class II cytokine receptor composed of IL10RB and IFNLR1, and receptor engagement leads to the activation of the JAK/STAT signaling pathway resulting in the expression of IFN-stimulated genes (ISG), which mediate the antiviral state. Has a restricted receptor distribution and therefore restricted targets: is primarily active in epithelial cells and this cell type-selective action is because of the epithelial cell-specific expression of its receptor IFNLR1. Seems not to be essential for early virus-activated host defense in vaginal infection, but plays an important role in Toll-like receptor (TLR)-induced antiviral defense. Plays a significant role in the antiviral immune defense in the intestinal epithelium. Exerts an immunomodulatory effect by up-regulating MHC class I antigen expression. The polypeptide is Interferon lambda-3 (IFNL3) (Homo sapiens (Human)).